The following is a 229-amino-acid chain: Histone H3-like centromeric protein CSE4 (229 aa).

Residues 1–35 (MSSKQQWVSSAIQSDSSGRSLSNVNRLAGDQQSIN) show a composition bias toward polar residues. Positions 1 to 78 (MSSKQQWVSS…DIETDYEDQA (78 aa)) are disordered. The segment covering 53-68 (PRREERRRYESSKSDL) has biased composition (basic and acidic residues). Residues 115 to 132 (KRREKQRKQSLKRVEKKY) carry the Nuclear localization signal motif. The H3-like stretch occupies residues 132–229 (YTPSELALYE…LARRIRGQFI (98 aa)).

Belongs to the histone H3 family. As to quaternary structure, component of centromeric nucleosomes, where DNA is wrapped around a histone octamer core. The octamer contains two molecules each of H2A, H2B, CSE4/CENPA and H4 assembled in one CSE4-H4 heterotetramer and two H2A-H2B heterodimers. Interacts with the inner kinetochore. Interacts with the central kinetochore protein CTF19. Interacts with YTA7. Post-translationally, ubiquitinated. Is degraded through ubiquitin-mediated proteolysis when not protected by its association to the kinetochore.

Its subcellular location is the nucleus. It is found in the chromosome. The protein resides in the centromere. Histone H3-like nucleosomal protein that is specifically found in centromeric nucleosomes. Replaces conventional H3 in the nucleosome core of centromeric chromatin that serves as an assembly site for the inner kinetochore. Required for recruitment and assembly of kinetochore proteins, mitotic progression and chromosome segregation. May serve as an epigenetic mark that propagates centromere identity through replication and cell division. Required for functional chromatin architecture at the yeast 2-micron circle partitioning locus and promotes equal plasmid segregation. The sequence is that of Histone H3-like centromeric protein CSE4 (CSE4) from Saccharomyces cerevisiae (strain ATCC 204508 / S288c) (Baker's yeast).